The primary structure comprises 186 residues: MNTSVIRVVVVSGSLRAPSRTHGLLQALVEKLQARLSNLDVHWVRIAELCSALSGSLERDTASADLQLHLQAIEQADLLLVGSPVYRASYTGLFKHLFDLVDHQSLRGVPVVLAATGGSERHALMIDHQLRPLFAFFQAHTLPYGLYASVEAFDQHHLVEPAQFERIERVLDTVSAFFQIPVASAA.

The protein belongs to the SsuE family.

The catalysed reaction is FMNH2 + NAD(+) = FMN + NADH + 2 H(+). Involved in the dimethyl sulfide degradation pathway. Catalyzes the NADH-dependent reduction of FMN. This chain is NADH-dependent FMN reductase SfnF, found in Pseudomonas putida (Arthrobacter siderocapsulatus).